The sequence spans 355 residues: Histidinol-phosphate aminotransferase (355 aa).

N6-(pyridoxal phosphate)lysine is present on Lys-218.

This sequence belongs to the class-II pyridoxal-phosphate-dependent aminotransferase family. Histidinol-phosphate aminotransferase subfamily. Homodimer. Requires pyridoxal 5'-phosphate as cofactor.

It carries out the reaction L-histidinol phosphate + 2-oxoglutarate = 3-(imidazol-4-yl)-2-oxopropyl phosphate + L-glutamate. Its pathway is amino-acid biosynthesis; L-histidine biosynthesis; L-histidine from 5-phospho-alpha-D-ribose 1-diphosphate: step 7/9. In Pelodictyon phaeoclathratiforme (strain DSM 5477 / BU-1), this protein is Histidinol-phosphate aminotransferase.